The chain runs to 376 residues: Cysteine proteinase 2 (376 aa).

The first 18 residues, 1–18, serve as a signal peptide directing secretion; it reads MRLLVFLILLIFVNFSFA. Residues 19-122 constitute a propeptide, activation peptide; sequence NVRPNGRRFS…EVLNVEDLQT (104 aa). Intrachain disulfides connect cysteine 144–cysteine 187, cysteine 178–cysteine 221, and cysteine 279–cysteine 365. Residue cysteine 147 is part of the active site. Active-site residues include histidine 286 and asparagine 343.

It belongs to the peptidase C1 family.

It localises to the lysosome. Its function is as follows. Cysteine proteinases 1 and 2 are believed to participate in the breakdown of protein during differentiation of Dictyostelium as a response to starvation. This Dictyostelium discoideum (Social amoeba) protein is Cysteine proteinase 2 (cprB).